Here is a 448-residue protein sequence, read N- to C-terminus: Beta-glucosidase A (448 aa).

E166 (proton donor) is an active-site residue. E352 serves as the catalytic Nucleophile.

Belongs to the glycosyl hydrolase 1 family. In terms of assembly, homooctamer.

It carries out the reaction Hydrolysis of terminal, non-reducing beta-D-glucosyl residues with release of beta-D-glucose.. In terms of biological role, bglA is intracellular and cleaves cellobiose probably through inorganic phosphate mediated hydrolysis. The protein is Beta-glucosidase A (bglA) of Paenibacillus polymyxa (Bacillus polymyxa).